The primary structure comprises 73 residues: Translation initiation factor IF-1 (73 aa).

In terms of domain architecture, S1-like spans 1–72; it reads MAKEEAIEKD…SKGRIVYRYK (72 aa).

This sequence belongs to the IF-1 family. Component of the 30S ribosomal translation pre-initiation complex which assembles on the 30S ribosome in the order IF-2 and IF-3, IF-1 and N-formylmethionyl-tRNA(fMet); mRNA recruitment can occur at any time during PIC assembly.

Its subcellular location is the cytoplasm. Functionally, one of the essential components for the initiation of protein synthesis. Stabilizes the binding of IF-2 and IF-3 on the 30S subunit to which N-formylmethionyl-tRNA(fMet) subsequently binds. Helps modulate mRNA selection, yielding the 30S pre-initiation complex (PIC). Upon addition of the 50S ribosomal subunit IF-1, IF-2 and IF-3 are released leaving the mature 70S translation initiation complex. In Salinibacter ruber (strain DSM 13855 / M31), this protein is Translation initiation factor IF-1.